A 609-amino-acid polypeptide reads, in one-letter code: Actin-interacting protein 1-2 (609 aa).

WD repeat units follow at residues 2 to 42 (ELSE…VTLD), 54 to 93 (EHAY…VLKN), 97 to 141 (VLAG…GEFD), 142 to 182 (GHSR…FKLS), 185 to 224 (EHSN…ILGE), 230 to 269 (GHKG…SGSL), 277 to 318 (GSSG…KSPF), 322 to 362 (GHMK…CGKL), 445 to 484 (NLGF…LTEE), 489 to 528 (RHRG…MKLK), 532 to 571 (YHSA…SSRM), and 576 to 609 (AHLG…FTPQ).

In terms of tissue distribution, expressed in leaves, stems, flower buds and flowers.

Binds actin. Enhances the F-actin depolymerization activity of actin-depolymerizing factor (ADF) proteins. This is Actin-interacting protein 1-2 from Arabidopsis thaliana (Mouse-ear cress).